We begin with the raw amino-acid sequence, 90 residues long: Small ribosomal subunit protein bS20 (90 aa).

The segment at 1–25 is disordered; that stretch reads MANSPSAKKRAKQAEKRRSHNASLR. The segment covering 7-20 has biased composition (basic residues); the sequence is AKKRAKQAEKRRSH.

It belongs to the bacterial ribosomal protein bS20 family.

Its function is as follows. Binds directly to 16S ribosomal RNA. The protein is Small ribosomal subunit protein bS20 of Pseudomonas fluorescens (strain Pf0-1).